The primary structure comprises 1481 residues: Cystic fibrosis transmembrane conductance regulator (1481 aa).

The Cytoplasmic segment spans residues 1 to 77 (MQRSPLEKAS…KLINALRRCF (77 aa)). The chain crosses the membrane as a helical span at residues 78-98 (FWRFMFYGILLYLGEVTKAVQ). Residues 81 to 365 (FMFYGILLYL…WAVQTWYDSL (285 aa)) enclose the ABC transmembrane type-1 1 domain. Residues 99-122 (PLLLGRIIASYDPDNKEERSIAIY) are Extracellular-facing. A helical membrane pass occupies residues 123 to 146 (LGIGLCLLFIVRTLLLHPAIFGLH). Topologically, residues 147–195 (HIGMQMRIAMFSLIYKKTLKLSSRVLDKISIGQLVSLLSNNLNKFDEGL) are cytoplasmic. The chain crosses the membrane as a helical span at residues 196–216 (ALAHFVWIVPLQVALLMGLIW). The Extracellular segment spans residues 217–222 (ELLQAS). A helical membrane pass occupies residues 223 to 243 (AFCGLGFLIVLALFQAGLGRM). Residues 244 to 298 (MMKYRDQRAGKINERLVITSEMIENIQSVKAYCWEEAMEKMIENLRQTELKLTRK) lie on the Cytoplasmic side of the membrane. Residues 299–319 (AAYVRYFNSSAFFFSGFFVVF) form a helical membrane-spanning segment. Residues 320–339 (LSVLPYALIKGIVLRKIFTT) lie on the Extracellular side of the membrane. Residues 340 to 358 (ISFCIVLRMAVTRQFPWAV) form a helical membrane-spanning segment. The Cytoplasmic segment spans residues 359-858 (QTWYDSLGAI…YLRYITVHKS (500 aa)). ATP is bound by residues W401, S434, 458-465 (GSTGAGKT), and Q493. The region spanning 423–646 (NDDDSLFFSN…RPDFSSKLMG (224 aa)) is the ABC transporter 1 domain. The S-palmitoyl cysteine moiety is linked to residue C524. Residues S549 and S660 each carry the phosphoserine modification. The tract at residues 654–831 (SAERRNSILT…EEINEEDLKE (178 aa)) is disordered R region. A Phosphoserine; by PKA modification is found at S670. S686 is modified (phosphoserine). Residue K688 forms a Glycyl lysine isopeptide (Lys-Gly) (interchain with G-Cter in ubiquitin) linkage. Phosphoserine is present on residues S700 and S712. Position 717 is a phosphothreonine (T717). Phosphoserine is present on residues S737, S753, S768, S790, S795, and S813. Residues 859–879 (LIFVLIWCLVIFLAEVAASLV) form a helical membrane-spanning segment. Residues 859-1155 (LIFVLIWCLV…AVNSSIDVDS (297 aa)) form the ABC transmembrane type-1 2 domain. Over 880 to 918 (VLWFLGNTPPQDKGNSTYSRNNSYAVIITRTSSYYVFYI) the chain is Extracellular. N-linked (GlcNAc...) asparagine glycans are attached at residues N894 and N900. Residues 919–939 (YVGVADTLLAMGFFRGLPLVH) form a discontinuously helical membrane-spanning segment. The Cytoplasmic segment spans residues 940–990 (TLITVSKILHHKMLHSVLQAPMSTLNTLKAGGILNRFSKDIAILDDLLPLT). The helical transmembrane segment at 991-1011 (IFDFIQLLLIVIGAIAVVAVL) threads the bilayer. Residues 1012–1013 (QP) are Extracellular-facing. The chain crosses the membrane as a helical span at residues 1014 to 1034 (YIFVATVPVIVAFIMLRAYFL). Topologically, residues 1035–1095 (QTSQQLKQLE…TANWFLYLST (61 aa)) are cytoplasmic. A helical transmembrane segment spans residues 1096–1116 (LRWFQMRIEMIFVIFFIAVTF). Residues 1117–1130 (ISILTTGEGEGTVG) are Extracellular-facing. The chain crosses the membrane as a helical span at residues 1131-1151 (IILTLAMNIMSTLQWAVNSSI). The Cytoplasmic portion of the chain corresponds to 1152–1481 (DVDSLMRSVS…TEEEVQDTRL (330 aa)). The region spanning 1211–1444 (MTVKDLTAKY…RSLFRQAISP (234 aa)) is the ABC transporter 2 domain. Residues Y1220 and 1245–1252 (GRTGSGKS) contribute to the ATP site. Positions 1387–1481 (RTLKQAFADC…TEEEVQDTRL (95 aa)) are interaction with GORASP2. C1396 is lipidated: S-palmitoyl cysteine. S1445 and S1457 each carry phosphoserine. The PDZ-binding signature appears at 1479–1481 (TRL).

It belongs to the ABC transporter superfamily. ABCC family. CFTR transporter (TC 3.A.1.202) subfamily. Monomer; does not require oligomerization for channel activity. May form oligomers in the membrane. Interacts with SLC26A3, SLC26A6 and NHERF1. Interacts with SHANK2. Interacts with MYO6. Interacts (via C-terminus) with GOPC (via PDZ domain); this promotes CFTR internalization and thereby decreases channel activity. Interacts with SLC4A7 through NHERF1. Found in a complex with MYO5B and RAB11A. Interacts with ANO1. Interacts with SLC26A8. Interacts with AHCYL1; the interaction increases CFTR activity. Interacts with CSE1L. The core-glycosylated form interacts with GORASP2 (via PDZ GRASP-type 1 domain) in respone to ER stress. Interacts with MARCHF2; the interaction leads to CFTR ubiqtuitination and degradation. Interacts with ADGRG2. Post-translationally, N-glycosylated. In terms of processing, phosphorylated; cAMP treatment promotes phosphorylation and activates the channel. Dephosphorylation decreases the ATPase activity (in vitro). Phosphorylation at PKA sites activates the channel. Phosphorylation at PKC sites enhances the response to phosphorylation by PKA. Phosphorylated by AMPK; this inhibits channel activity. Ubiquitinated, leading to its degradation in the lysosome. Deubiquitination by USP10 in early endosomes enhances its endocytic recycling to the cell membrane. Ubiquitinated by RNF185 during ER stress. Ubiquitinated by MARCHF2.

The protein resides in the apical cell membrane. It localises to the early endosome membrane. It is found in the cell membrane. Its subcellular location is the recycling endosome membrane. The protein localises to the endoplasmic reticulum membrane. The protein resides in the nucleus. The catalysed reaction is ATP + H2O + closed Cl(-) channel = ADP + phosphate + open Cl(-) channel.. The enzyme catalyses chloride(in) = chloride(out). It catalyses the reaction hydrogencarbonate(in) = hydrogencarbonate(out). It carries out the reaction ATP + H2O = ADP + phosphate + H(+). In terms of biological role, epithelial ion channel that plays an important role in the regulation of epithelial ion and water transport and fluid homeostasis. Mediates the transport of chloride ions across the cell membrane. Possesses an intrinsic ATPase activity and utilizes ATP to gate its channel; the passive flow of anions through the channel is gated by cycles of ATP binding and hydrolysis by the ATP-binding domains. The ion channel is also permeable to HCO(3)(-); selectivity depends on the extracellular chloride concentration. Exerts its function also by modulating the activity of other ion channels and transporters. Contributes to the regulation of the pH and the ion content of the epithelial fluid layer. Modulates the activity of the epithelial sodium channel (ENaC) complex, in part by regulating the cell surface expression of the ENaC complex. May regulate bicarbonate secretion and salvage in epithelial cells by regulating the transporter SLC4A7. Can inhibit the chloride channel activity of ANO1. Plays a role in the chloride and bicarbonate homeostasis during sperm epididymal maturation and capacitation. This Macaca fascicularis (Crab-eating macaque) protein is Cystic fibrosis transmembrane conductance regulator.